We begin with the raw amino-acid sequence, 424 residues long: MPVNLPEIVPASLTPIQGIRLGWAESNIKTQNRKDLLVIEICDGSAVSGVFTQNRFCAAPVTLCKKHLDAVKNNATTGGNVSGIKALVVNTGNANAGTGEQGMLDALTTCQHLAEIMAIPVESILPFSTGVILEHLPMDKLLAGLPLAVTNLTTDNWADAASAIMTTDIAPKAYATQVKVGGESINITGISKGAGMIHPNMATMLGYVATDANITQSLLDSMTKEIADLSFNCISVDGDTSTNDSFIVIATGKSNAVAITSPNDKGYQEVFDALLETSQYLAKAIVRDGEGATKFITVTVKGALSIDEAKTIGFSIGKSPLVKTAMFASDPNLGRVLAAIGYASRECDSLADLDTNQLELYFGGLLVAEKGGRAASYKEDEGQAIMNEAEIDITVQLHRGNEESTIWTCDFSYDYVKINAEYRT.

Residues Thr166, Lys192, Thr203, Glu290, Asn419, and Thr424 each contribute to the substrate site. Thr203 acts as the Nucleophile in catalysis.

Belongs to the ArgJ family. In terms of assembly, heterotetramer of two alpha and two beta chains.

The protein resides in the cytoplasm. It carries out the reaction N(2)-acetyl-L-ornithine + L-glutamate = N-acetyl-L-glutamate + L-ornithine. The enzyme catalyses L-glutamate + acetyl-CoA = N-acetyl-L-glutamate + CoA + H(+). It participates in amino-acid biosynthesis; L-arginine biosynthesis; L-ornithine and N-acetyl-L-glutamate from L-glutamate and N(2)-acetyl-L-ornithine (cyclic): step 1/1. It functions in the pathway amino-acid biosynthesis; L-arginine biosynthesis; N(2)-acetyl-L-ornithine from L-glutamate: step 1/4. Functionally, catalyzes two activities which are involved in the cyclic version of arginine biosynthesis: the synthesis of N-acetylglutamate from glutamate and acetyl-CoA as the acetyl donor, and of ornithine by transacetylation between N(2)-acetylornithine and glutamate. In Colwellia psychrerythraea (strain 34H / ATCC BAA-681) (Vibrio psychroerythus), this protein is Arginine biosynthesis bifunctional protein ArgJ.